The primary structure comprises 747 residues: Probable copper-transporting ATPase PacS (747 aa).

Over 1–101 (MVNQQTLTLR…RQLAQRVWVS (101 aa)) the chain is Cytoplasmic. The HMA domain maps to 3–69 (NQQTLTLRGM…AIEAAGYHAF (67 aa)). Cysteine 14 and cysteine 17 together coordinate a metal cation. A helical membrane pass occupies residues 102-122 (GLIASLLVIGSLPMMLGISIP). The Extracellular segment spans residues 123 to 132 (GIPMWLHHPG). The helical transmembrane segment at 133 to 151 (LQLGLTLPVLWAGRSFFIN) threads the bilayer. Topologically, residues 152-158 (AWKAFRQ) are cytoplasmic. A helical membrane pass occupies residues 159–179 (NTATMDTLVAVGTGAAFLYSL). The Extracellular portion of the chain corresponds to 180–199 (AVTLFPQWLTRQGLPPDVYY). Residues 200–220 (EAIAVIIALLLLGRSLEERAK) form a helical membrane-spanning segment. Residues 221–348 (GQTSAAIRQL…KAPIQRLADQ (128 aa)) lie on the Cytoplasmic side of the membrane. A helical membrane pass occupies residues 349-371 (VTGWFVPAVIAIAILTFVLWFNW). Residues 372 to 378 (IGNVTLA) are Extracellular-facing. The chain crosses the membrane as a helical span at residues 379–396 (LITAVGVLIIACPCALGL). Over 397-688 (ATPTSIMVGT…QLSRATMTNI (292 aa)) the chain is Cytoplasmic. Catalysis depends on aspartate 434, which acts as the 4-aspartylphosphate intermediate. 2 residues coordinate Mg(2+): aspartate 634 and aspartate 638. A helical membrane pass occupies residues 689 to 708 (RQNLFFAFIYNVAGIPIAAG). At 709 to 720 (ILYPLLGWLLSP) the chain is on the extracellular side. Residues 721–739 (MLAGAAMAFSSVSVVTNAL) traverse the membrane as a helical segment. Residues 740–747 (RLRQFQPR) lie on the Cytoplasmic side of the membrane.

This sequence belongs to the cation transport ATPase (P-type) (TC 3.A.3) family. Type IB subfamily.

It is found in the cell membrane. It catalyses the reaction Cu(+)(in) + ATP + H2O = Cu(+)(out) + ADP + phosphate + H(+). May play a role in the osmotic adaptation. This is Probable copper-transporting ATPase PacS (pacS) from Synechococcus elongatus (strain ATCC 33912 / PCC 7942 / FACHB-805) (Anacystis nidulans R2).